The sequence spans 69 residues: MAKILKFVFAIILFFSLFLLSMEAEPLLPCETDGDCPLKPIIETTPMISLHYMCIDKECVLFREVLQTP.

Residues 1–24 form the signal peptide; sequence MAKILKFVFAIILFFSLFLLSMEA.

The protein is Nodulin-3 (ENOD3) of Pisum sativum (Garden pea).